We begin with the raw amino-acid sequence, 354 residues long: Uroporphyrinogen decarboxylase (354 aa).

Substrate contacts are provided by residues 27–31 (RQAGR), D77, Y154, S209, and H327.

The protein belongs to the uroporphyrinogen decarboxylase family. As to quaternary structure, homodimer.

The protein resides in the cytoplasm. The enzyme catalyses uroporphyrinogen III + 4 H(+) = coproporphyrinogen III + 4 CO2. Its pathway is porphyrin-containing compound metabolism; protoporphyrin-IX biosynthesis; coproporphyrinogen-III from 5-aminolevulinate: step 4/4. Functionally, catalyzes the decarboxylation of four acetate groups of uroporphyrinogen-III to yield coproporphyrinogen-III. This chain is Uroporphyrinogen decarboxylase, found in Shewanella piezotolerans (strain WP3 / JCM 13877).